The primary structure comprises 116 residues: Ribonuclease P protein component (116 aa).

The protein belongs to the RnpA family. As to quaternary structure, consists of a catalytic RNA component (M1 or rnpB) and a protein subunit.

It carries out the reaction Endonucleolytic cleavage of RNA, removing 5'-extranucleotides from tRNA precursor.. RNaseP catalyzes the removal of the 5'-leader sequence from pre-tRNA to produce the mature 5'-terminus. It can also cleave other RNA substrates such as 4.5S RNA. The protein component plays an auxiliary but essential role in vivo by binding to the 5'-leader sequence and broadening the substrate specificity of the ribozyme. This Mycobacterium bovis (strain ATCC BAA-935 / AF2122/97) protein is Ribonuclease P protein component.